Consider the following 393-residue polypeptide: Mitogen-activated protein kinase 10 (393 aa).

Residues 60-345 (KPPIRPIGRG…VKEALAHPYL (286 aa)) enclose the Protein kinase domain. ATP-binding positions include 66–74 (IGRGACGIV) and lysine 89. Aspartate 186 (proton acceptor) is an active-site residue. Residue threonine 218 is modified to Phosphothreonine. Positions 218-220 (TEY) match the TXY motif. A Phosphotyrosine modification is found at tyrosine 220. Position 223 is a phosphothreonine (threonine 223).

The protein belongs to the protein kinase superfamily. CMGC Ser/Thr protein kinase family. MAP kinase subfamily. As to quaternary structure, interacts with MKK2. Post-translationally, dually phosphorylated on Thr-218 and Tyr-220, which activates the enzyme.

The catalysed reaction is L-seryl-[protein] + ATP = O-phospho-L-seryl-[protein] + ADP + H(+). It carries out the reaction L-threonyl-[protein] + ATP = O-phospho-L-threonyl-[protein] + ADP + H(+). With respect to regulation, activated by threonine and tyrosine phosphorylation. The sequence is that of Mitogen-activated protein kinase 10 (MPK10) from Arabidopsis thaliana (Mouse-ear cress).